The chain runs to 268 residues: Phosphoethanolamine/phosphocholine phosphatase (268 aa).

Asp32 functions as the Nucleophile in the catalytic mechanism. The Mg(2+) site is built by Asp32 and Asp34. Asp34 functions as the Proton donor in the catalytic mechanism. Residues Asp43 and Asp123 each coordinate substrate. Asp203 is a binding site for Mg(2+).

Belongs to the HAD-like hydrolase superfamily. PHOSPHO family. Mg(2+) serves as cofactor. Expressed at sites of mineralization in bone and cartilage. Highly expressed in hypertrophic chondrocytes compared to non-chondrogenic tissues. Expressed in chondrocytes but not in heart, liver, lung, kidney, spleen, muscle, adipose tissues not duodenum. In diaphyseal cortical bone, it is expressed in the osteoid layer of the periosteum, forming surfaces of growing osteons, and newly formed osteocytes, whereas it is not expressed in the endosteum and closed osteons. In growth plate cartilage, it is limited to the early hypertrophic chondrocytes and the ossification groove of Ranvier. Highly expressed on the mineralization surfaces of the cartilage remnants and trabecular bone within the primary spongiosa. Expressed in 17-day-old embryonic calvaria, the osteoid present on the intramembranous and periosteal bone surfaces but not in soft tissues examined.

It localises to the extracellular vesicle. The catalysed reaction is phosphoethanolamine + H2O = ethanolamine + phosphate. It catalyses the reaction phosphocholine + H2O = choline + phosphate. Its function is as follows. Phosphatase that has a high activity toward phosphoethanolamine (PEA) and phosphocholine (PCho). Involved in the generation of inorganic phosphate for bone mineralization. This chain is Phosphoethanolamine/phosphocholine phosphatase (PHOSPHO1), found in Gallus gallus (Chicken).